Consider the following 389-residue polypeptide: GDSL esterase/lipase At5g14450 (389 aa).

Residues 1-30 (MKDNLERAKLMVSSTVFSWLLLCLFAVTTS) form the signal peptide. Ser48 acts as the Nucleophile in catalysis. N-linked (GlcNAc...) asparagine glycosylation is found at Asn125 and Asn335. Active-site residues include Asp354 and His357.

This sequence belongs to the 'GDSL' lipolytic enzyme family.

The protein localises to the secreted. The sequence is that of GDSL esterase/lipase At5g14450 from Arabidopsis thaliana (Mouse-ear cress).